The chain runs to 894 residues: Glutamate receptor 3 (894 aa).

Residues 1 to 28 form the signal peptide; it reads MARQKKMGQSVLRAVFFLVLGLLGHSHG. Topologically, residues 29 to 552 are extracellular; the sequence is GFPNTISIGG…GVFSFLDPLA (524 aa). Residues Asn63, Asn266, Asn380, Asn415, and Asn422 are each glycosylated (N-linked (GlcNAc...) asparagine). Cysteines 91 and 340 form a disulfide. The L-glutamate site is built by Pro508, Thr510, and Arg515. Residues 553–573 traverse the membrane as a helical segment; sequence YEIWMCIVFAYIGVSVVLFLV. Residues 574 to 602 lie on the Cytoplasmic side of the membrane; it reads SRFSPYEWHLEDNNEEPRDPQSPPDPPNE. Residues 603 to 618 constitute an intramembrane region (helical; Pore-forming); the sequence is FGIFNSLWFSLGAFMQ. The stretch at 619–621 is an intramembrane region; sequence QGC. Cys621 carries S-palmitoyl cysteine lipidation. Residues 622–627 are Cytoplasmic-facing; that stretch reads DISPRS. The chain crosses the membrane as a helical span at residues 628–648; that stretch reads LSGRIVGGVWWFFTLIIISSY. Topologically, residues 649–823 are extracellular; the sequence is TANLAAFLTV…DKTSALSLSN (175 aa). L-glutamate-binding residues include Ser686, Thr687, and Glu737. An intrachain disulfide couples Cys750 to Cys805. The chain crosses the membrane as a helical span at residues 824 to 844; it reads VAGVFYILVGGLGLAMMVALI. The Cytoplasmic portion of the chain corresponds to 845-894; that stretch reads EFCYKSRAESKRMKLTKNTQNFKPAPATNTQNYATYREGYNVYGTESVKI. A lipid anchor (S-palmitoyl cysteine) is attached at Cys847. A phosphotyrosine mark is found at Tyr877 and Tyr887.

It belongs to the glutamate-gated ion channel (TC 1.A.10.1) family. GRIA3 subfamily. In terms of assembly, homotetramer or heterotetramer of pore-forming glutamate receptor subunits. Tetramers may be formed by the dimerization of dimers. Interacts with PICK1, GRIP1 and GRIP2. Found in a complex with GRIA1, GRIA2, GRIA4, CNIH2, CNIH3, CACNG2, CACNG3, CACNG4, CACNG5, CACNG7 and CACNG8. Interacts with CACNG5. Found in a complex with GRIA1, GRIA2, GRIA4, DLG4, CACNG8 and CNIH2.

It is found in the cell membrane. It localises to the postsynaptic cell membrane. The protein localises to the postsynaptic density membrane. It catalyses the reaction Ca(2+)(in) = Ca(2+)(out). Ionotropic glutamate receptor that functions as a ligand-gated cation channel, gated by L-glutamate and glutamatergic agonists such as alpha-amino-3-hydroxy-5-methyl-4-isoxazolepropionic acid (AMPA), quisqualic acid, and kainic acid. L-glutamate acts as an excitatory neurotransmitter at many synapses in the central nervous system and plays an important role in fast excitatory synaptic transmission by inducing long-term potentiation. Binding of the excitatory neurotransmitter L-glutamate induces a conformation change, leading to the opening of the cation channel, and thereby converts the chemical signal to an electrical impulse upon entry of calcium. The receptor then desensitizes rapidly and enters a transient inactive state, characterized by the presence of bound agonist. In the presence of CACNG8, shows resensitization which is characterized by a delayed accumulation of current flux upon continued application of glutamate. This chain is Glutamate receptor 3, found in Homo sapiens (Human).